A 314-amino-acid polypeptide reads, in one-letter code: MKQNPKISLIGSGNIGGTLAHLISLRELGDIVLFDVTEGVPQGKALDLMQAGTIAGSDINIKGTNDYKDIEGSDAIIITAGLPRKPGMSREDLISINTGIMKTVAANVKKYAPDAFVIVITNPLDVMVYVMLKESGLPHNKVIGMAGVLDSSRFNLFLAEEFKVSVSNVNSMVLGGHGDAMVPLARYSTISGVPIPDLIKMGLSSNENIEKIIDRTRNGGGEIVALLKTGSAYYAPAASAIEMLESYLKDKRQILTCAAHLQGEYGVHDLYVGVPIMIGKEGVLRVIELQLTTEEKALFDKSVEGVKKLIETIK.

NAD(+)-binding positions include 11 to 16 (GSGNIG) and D35. R84 and R90 together coordinate substrate. Residues N97 and 120 to 122 (ITN) each bind NAD(+). Positions 122 and 153 each coordinate substrate. Residue H177 is the Proton acceptor of the active site.

It belongs to the LDH/MDH superfamily. MDH type 3 family.

The enzyme catalyses (S)-malate + NAD(+) = oxaloacetate + NADH + H(+). Its function is as follows. Catalyzes the reversible oxidation of malate to oxaloacetate. This is Malate dehydrogenase from Rickettsia africae (strain ESF-5).